Consider the following 433-residue polypeptide: Glutamate-1-semialdehyde 2,1-aminomutase (433 aa).

Lysine 266 bears the N6-(pyridoxal phosphate)lysine mark.

It belongs to the class-III pyridoxal-phosphate-dependent aminotransferase family. HemL subfamily. As to quaternary structure, homodimer. The cofactor is pyridoxal 5'-phosphate.

It is found in the cytoplasm. It catalyses the reaction (S)-4-amino-5-oxopentanoate = 5-aminolevulinate. It functions in the pathway porphyrin-containing compound metabolism; protoporphyrin-IX biosynthesis; 5-aminolevulinate from L-glutamyl-tRNA(Glu): step 2/2. This Psychrobacter arcticus (strain DSM 17307 / VKM B-2377 / 273-4) protein is Glutamate-1-semialdehyde 2,1-aminomutase.